The primary structure comprises 432 residues: 3-phosphoshikimate 1-carboxyvinyltransferase (432 aa).

The 3-phosphoshikimate site is built by lysine 22, serine 23, and arginine 27. Phosphoenolpyruvate is bound at residue lysine 22. Phosphoenolpyruvate is bound by residues glycine 96 and arginine 127. 3-phosphoshikimate is bound by residues serine 173, serine 174, glutamine 175, serine 201, aspartate 317, asparagine 340, and lysine 344. Glutamine 175 provides a ligand contact to phosphoenolpyruvate. Residue aspartate 317 is the Proton acceptor of the active site. Phosphoenolpyruvate-binding residues include arginine 348, arginine 392, and lysine 417.

This sequence belongs to the EPSP synthase family. Monomer.

It is found in the cytoplasm. The catalysed reaction is 3-phosphoshikimate + phosphoenolpyruvate = 5-O-(1-carboxyvinyl)-3-phosphoshikimate + phosphate. It functions in the pathway metabolic intermediate biosynthesis; chorismate biosynthesis; chorismate from D-erythrose 4-phosphate and phosphoenolpyruvate: step 6/7. Catalyzes the transfer of the enolpyruvyl moiety of phosphoenolpyruvate (PEP) to the 5-hydroxyl of shikimate-3-phosphate (S3P) to produce enolpyruvyl shikimate-3-phosphate and inorganic phosphate. The polypeptide is 3-phosphoshikimate 1-carboxyvinyltransferase (Mannheimia haemolytica (Pasteurella haemolytica)).